Reading from the N-terminus, the 122-residue chain is Small ribosomal subunit protein uS13 (122 aa).

Positions Arg-99–Lys-122 are disordered.

The protein belongs to the universal ribosomal protein uS13 family. In terms of assembly, part of the 30S ribosomal subunit. Forms a loose heterodimer with protein S19. Forms two bridges to the 50S subunit in the 70S ribosome.

In terms of biological role, located at the top of the head of the 30S subunit, it contacts several helices of the 16S rRNA. In the 70S ribosome it contacts the 23S rRNA (bridge B1a) and protein L5 of the 50S subunit (bridge B1b), connecting the 2 subunits; these bridges are implicated in subunit movement. Contacts the tRNAs in the A and P-sites. In Sinorhizobium fredii (strain NBRC 101917 / NGR234), this protein is Small ribosomal subunit protein uS13.